Consider the following 452-residue polypeptide: Probable glycine dehydrogenase (decarboxylating) subunit 1 (452 aa).

It belongs to the GcvP family. N-terminal subunit subfamily. As to quaternary structure, the glycine cleavage system is composed of four proteins: P, T, L and H. In this organism, the P 'protein' is a heterodimer of two subunits.

It carries out the reaction N(6)-[(R)-lipoyl]-L-lysyl-[glycine-cleavage complex H protein] + glycine + H(+) = N(6)-[(R)-S(8)-aminomethyldihydrolipoyl]-L-lysyl-[glycine-cleavage complex H protein] + CO2. Its function is as follows. The glycine cleavage system catalyzes the degradation of glycine. The P protein binds the alpha-amino group of glycine through its pyridoxal phosphate cofactor; CO(2) is released and the remaining methylamine moiety is then transferred to the lipoamide cofactor of the H protein. This Novosphingobium aromaticivorans (strain ATCC 700278 / DSM 12444 / CCUG 56034 / CIP 105152 / NBRC 16084 / F199) protein is Probable glycine dehydrogenase (decarboxylating) subunit 1.